A 244-amino-acid polypeptide reads, in one-letter code: Sperm-egg fusion protein Juno (244 aa).

A signal peptide spans 1 to 19; that stretch reads MAQWWQILLGLWAVLPTLA. Intrachain disulfides connect Cys27-Cys55, Cys47-Cys95, Cys56-Cys99, Cys79-Cys166, Cys86-Cys137, Cys126-Cys200, Cys130-Cys180, and Cys143-Cys160. Residues 62–81 form an important for interaction with IZUMO1 region; the sequence is WEAHLEEPLLFNFSMMHCGL. A glycan (N-linked (GlcNAc...) asparagine) is linked at Asn73. A glycan (N-linked (GlcNAc...) asparagine) is linked at Asn185. The GPI-anchor amidated glycine moiety is linked to residue Gly222. A propeptide spanning residues 223-244 is cleaved from the precursor; the sequence is SALAPQLSYTLPAFSLCLLFHP.

Belongs to the folate receptor family. Monomer. Interacts with IZUMO1; the interaction is direct. IZUMO1 and IZUMO1R/JUNO form a complex with 1:1 stoichiometry. Interacts with WDR54. In terms of processing, the protein is rapidly cleaved following fertilization, being only weakly detectable in zona-intact fertilized eggs at telophase II and undetectable at the pronuclear stage. Sheding is probably required to block to polyspermy and ensuring egg fusion with a single sperm. Widely expressed with higher expression in thymus, spleen and lung. Present at the cell surface of unfertilized oocytes, while it is barely detectable 30 to 40 minutes after fertilization (at protein level).

The protein resides in the cell membrane. Functionally, receptor for IZUMO1 present at the cell surface of oocytes (oolemma), which is essential for species-specific gamete recognition and fertilization. The IZUMO1:IZUMO1R/JUNO interaction is a necessary adhesion event between sperm and egg that is required for fertilization but is not sufficient for cell fusion. The ligand-receptor interaction probably does not act as a membrane 'fusogen'. Does not bind folate. In Mus musculus (Mouse), this protein is Sperm-egg fusion protein Juno.